Consider the following 445-residue polypeptide: MGITILKNEGLDFHARISTPLSEIDDDIQKELLDLTKKVKIAGFRAGKVPVSIVKKKYGTSVRNDIIERRINNSVNHVIKEHNLNIIGRPKIEELQNESDKALEFTVKIELLPKITIPDLKKISLDRPKLEVNSKDVEEQLEKLAALTKNYTKESKAKIKDGDQVTIDAIGYIKEKAFEDGKLNDFKVIIGSNALIPGFEKQLIGSKTGSKVDVNVTFPENYHAKDLAGKDARFVVQIKAVHTAEPTVIDDEFAKKFQSNSLEELRTHFTKQIENESEEAINTIMKMNLFDKLEKLLDFDVPESLLEQEKNILKSGTDKNEQDESLLKDKSSKEITAYYNKLALRRVRIGLLLAEYAKSKNLQLEPDDLRKVIMQQARNFPGQENMIFDFYKNNPRAIEGLKGPALEDKAVQYIFNHEIKLKEKKYTKEELEKYLEAEEQRITLI.

Positions 162-247 (GDQVTIDAIG…IKAVHTAEPT (86 aa)) constitute a PPIase FKBP-type domain.

This sequence belongs to the FKBP-type PPIase family. Tig subfamily.

Its subcellular location is the cytoplasm. It carries out the reaction [protein]-peptidylproline (omega=180) = [protein]-peptidylproline (omega=0). Involved in protein export. Acts as a chaperone by maintaining the newly synthesized protein in an open conformation. Functions as a peptidyl-prolyl cis-trans isomerase. The chain is Trigger factor from Rickettsia conorii (strain ATCC VR-613 / Malish 7).